The chain runs to 427 residues: 3-phosphoshikimate 1-carboxyvinyltransferase (427 aa).

Residues lysine 20, serine 21, and arginine 25 each contribute to the 3-phosphoshikimate site. Lysine 20 is a binding site for phosphoenolpyruvate. 2 residues coordinate phosphoenolpyruvate: glycine 92 and arginine 120. 3-phosphoshikimate contacts are provided by serine 166, glutamine 168, aspartate 312, and lysine 339. Residue glutamine 168 coordinates phosphoenolpyruvate. Aspartate 312 functions as the Proton acceptor in the catalytic mechanism. The phosphoenolpyruvate site is built by arginine 343 and arginine 385.

It belongs to the EPSP synthase family. As to quaternary structure, monomer.

It localises to the cytoplasm. The catalysed reaction is 3-phosphoshikimate + phosphoenolpyruvate = 5-O-(1-carboxyvinyl)-3-phosphoshikimate + phosphate. It participates in metabolic intermediate biosynthesis; chorismate biosynthesis; chorismate from D-erythrose 4-phosphate and phosphoenolpyruvate: step 6/7. Functionally, catalyzes the transfer of the enolpyruvyl moiety of phosphoenolpyruvate (PEP) to the 5-hydroxyl of shikimate-3-phosphate (S3P) to produce enolpyruvyl shikimate-3-phosphate and inorganic phosphate. The chain is 3-phosphoshikimate 1-carboxyvinyltransferase from Streptococcus pyogenes serotype M4 (strain MGAS10750).